Consider the following 126-residue polypeptide: Sperm acrosome membrane-associated protein 4 (126 aa).

The signal sequence occupies residues 1 to 19; sequence MVLGWLPLLVMVLAPGTTG. Disulfide bonds link C23-C47, C26-C34, C41-C65, C71-C90, and C91-C96. A UPAR/Ly6 domain is found at 23 to 97; it reads CVFCELTDST…TNCCTGHMCN (75 aa). N97 carries the GPI-anchor amidated asparagine lipid modification. The propeptide at 98–126 is removed in mature form; that stretch reads GAPDPTRGRLAGAAASLALGVLLLLQHVL.

It belongs to the SPACA4/bouncer family.

The protein resides in the cell membrane. It is found in the cytoplasmic vesicle. The protein localises to the secretory vesicle. It localises to the acrosome. Its subcellular location is the acrosome inner membrane. The protein resides in the acrosome outer membrane. Sperm surface membrane protein that is essential for effective sperm-zona pellucida binding and penetration during fertilization. The polypeptide is Sperm acrosome membrane-associated protein 4 (SPACA4) (Bos taurus (Bovine)).